A 132-amino-acid chain; its full sequence is Ribosome-binding factor A (132 aa).

This sequence belongs to the RbfA family. In terms of assembly, monomer. Binds 30S ribosomal subunits, but not 50S ribosomal subunits or 70S ribosomes.

It is found in the cytoplasm. One of several proteins that assist in the late maturation steps of the functional core of the 30S ribosomal subunit. Associates with free 30S ribosomal subunits (but not with 30S subunits that are part of 70S ribosomes or polysomes). Required for efficient processing of 16S rRNA. May interact with the 5'-terminal helix region of 16S rRNA. The chain is Ribosome-binding factor A from Burkholderia vietnamiensis (strain G4 / LMG 22486) (Burkholderia cepacia (strain R1808)).